A 193-amino-acid chain; its full sequence is ATP-dependent Clp protease proteolytic subunit 1 (193 aa).

Serine 98 functions as the Nucleophile in the catalytic mechanism. The active site involves histidine 123.

It belongs to the peptidase S14 family. As to quaternary structure, fourteen ClpP subunits assemble into 2 heptameric rings which stack back to back to give a disk-like structure with a central cavity, resembling the structure of eukaryotic proteasomes.

The protein resides in the cytoplasm. It carries out the reaction Hydrolysis of proteins to small peptides in the presence of ATP and magnesium. alpha-casein is the usual test substrate. In the absence of ATP, only oligopeptides shorter than five residues are hydrolyzed (such as succinyl-Leu-Tyr-|-NHMec, and Leu-Tyr-Leu-|-Tyr-Trp, in which cleavage of the -Tyr-|-Leu- and -Tyr-|-Trp bonds also occurs).. In terms of biological role, cleaves peptides in various proteins in a process that requires ATP hydrolysis. Has a chymotrypsin-like activity. Plays a major role in the degradation of misfolded proteins. The polypeptide is ATP-dependent Clp protease proteolytic subunit 1 (Bacillus cereus (strain ATCC 10987 / NRS 248)).